The chain runs to 222 residues: Ribosomal RNA small subunit methyltransferase G (222 aa).

Gly-80, Leu-85, and Arg-149 together coordinate S-adenosyl-L-methionine.

This sequence belongs to the methyltransferase superfamily. RNA methyltransferase RsmG family.

The protein resides in the cytoplasm. Functionally, specifically methylates the N7 position of a guanine in 16S rRNA. The sequence is that of Ribosomal RNA small subunit methyltransferase G from Treponema pallidum (strain Nichols).